Consider the following 1146-residue polypeptide: Probable transport protein MmpL12 (1146 aa).

The next 11 membrane-spanning stretches (helical) occupy residues 25–45 (LIVI…LPTL), 206–226 (VSVL…LVPL), 254–274 (AIVF…VFLI), 298–318 (IGKV…AMVF), 330–350 (AIAV…PAIL), 382–402 (TIHL…TLLI), 826–846 (FIVI…LRAL), 850–870 (IYLI…GTLV), 883–903 (LPGL…MLLI), 928–948 (VITS…GASI), and 949–969 (NTMA…TFLV).

The protein belongs to the resistance-nodulation-cell division (RND) (TC 2.A.6) family. MmpL subfamily.

It localises to the cell membrane. The chain is Probable transport protein MmpL12 (mmpL12) from Mycobacterium tuberculosis (strain CDC 1551 / Oshkosh).